Reading from the N-terminus, the 72-residue chain is Alpha-elapitoxin-Dpp2a (72 aa).

5 disulfides stabilise this stretch: Cys-3-Cys-21, Cys-14-Cys-42, Cys-27-Cys-31, Cys-46-Cys-57, and Cys-58-Cys-63.

Belongs to the three-finger toxin family. Long-chain subfamily. Type II alpha-neurotoxin sub-subfamily. As to expression, expressed by the venom gland.

The protein localises to the secreted. In terms of biological role, binds with high affinity to muscular (alpha-1/CHRNA1) and neuronal (alpha-7/CHRNA7) nicotinic acetylcholine receptor (nAChR) and inhibits acetylcholine from binding to the receptor, thereby impairing neuromuscular and neuronal transmission. In Dendroaspis polylepis polylepis (Black mamba), this protein is Alpha-elapitoxin-Dpp2a.